Consider the following 526-residue polypeptide: MFAPSYDAVLSYTSIGGVQCPRLCYKLVLVTVGLCFCIFCTSLDNTIVATAVPRITQQFHSLDDVGWYASAYLLTTCAVTLPFGRLYTFFPIKWVYLSALFVFELGSFICGITPSSLGLILGRAVAGLGGGGLFSGSLLIITQCVPLRRRPAFSGFIMSIFAVASVIAPLMGGAFTDHISWRWCFYINLPFGLVSAVVIFFTFQTTKPVVQASLREKAAGLDPLGTATFLPAIVCLLLATQWGGAQYPWGDGRIIALFTLFGVLLACFVGLQLWARERATLPPRLLRGRNIWGSALYGFCLNGAMFTFVYYLPIWFQAVQGTSATESGIRNLPLVISNVIFAIISGVLVSATGYFGPFMLLSAAMASIAAGLLSMLHPSSGAGEWIGYQVLLGSSIGMGFQLPVFVVQTTLASTDIPTATALMTFIQLLGGAIFVSVAQNVFRNQLAADIRAALPMLDPKAVINAGPTSLRAMYSGETLTTLVAMYNDAVVHTFYLAIGLAAASFLAATVIQWRPSPKSISHPDSS.

14 helical membrane-spanning segments follow: residues 23–43, 64–84, 89–109, 125–145, 155–175, 183–203, 218–238, 254–274, 296–316, 339–359, 360–380, 386–406, 418–438, and 491–511; these read LCYK…CTSL, DVGW…LPFG, FFPI…GSFI, VAGL…TQCV, GFIM…GGAF, WCFY…FFTF, AAGL…CLLL, IIAL…LQLW, LYGF…PIWF, VIFA…GPFM, LLSA…HPSS, IGYQ…PVFV, TATA…VSVA, and VHTF…ATVI.

Belongs to the major facilitator superfamily. TCR/Tet family.

It is found in the cell membrane. In terms of biological role, efflux pump; part of the gene cluster that mediates the biosynthesis of aurasperone B, a dimeric gamma-naphthopyrone. The protein is Efflux pump aunC of Aspergillus niger (strain ATCC 1015 / CBS 113.46 / FGSC A1144 / LSHB Ac4 / NCTC 3858a / NRRL 328 / USDA 3528.7).